Here is a 182-residue protein sequence, read N- to C-terminus: Large ribosomal subunit protein uL13 (182 aa).

The protein belongs to the universal ribosomal protein uL13 family. Part of the 50S ribosomal subunit.

This protein is one of the early assembly proteins of the 50S ribosomal subunit, although it is not seen to bind rRNA by itself. It is important during the early stages of 50S assembly. This is Large ribosomal subunit protein uL13 from Pyrobaculum neutrophilum (strain DSM 2338 / JCM 9278 / NBRC 100436 / V24Sta) (Thermoproteus neutrophilus).